The following is a 247-amino-acid chain: Pulmonary surfactant-associated protein A (247 aa).

An N-terminal signal peptide occupies residues 1-15; that stretch reads MLLLSLALTLISAPA. The 73-residue stretch at 27–99 folds into the Collagen-like domain; it reads GSPGIPGTPG…PGERGPPGLP (73 aa). A 4-hydroxyproline mark is found at proline 29, proline 32, proline 35, proline 41, proline 53, proline 56, proline 62, proline 66, and proline 69. Positions 30 to 100 are disordered; the sequence is GIPGTPGSHG…GERGPPGLPA (71 aa). Positions 41-50 are enriched in basic and acidic residues; it reads PGRDGRDGVK. Residues 53–64 are compositionally biased toward pro residues; the sequence is PGPPGPMGPPGG. Residues 83–92 show a composition bias toward basic and acidic residues; sequence ERGDKGEPGE. Positions 132–247 constitute a C-type lectin domain; sequence AVGEKIFSTN…LQYRLVICEF (116 aa). Disulfide bonds link cysteine 154–cysteine 245 and cysteine 223–cysteine 237. The N-linked (GlcNAc...) asparagine glycan is linked to asparagine 206. Residues glutamate 214, arginine 216, asparagine 233, and aspartate 234 each coordinate Ca(2+).

The protein belongs to the SFTPA family. Oligomeric complex of 6 set of homotrimers.

The protein localises to the secreted. The protein resides in the extracellular space. It is found in the extracellular matrix. Its subcellular location is the surface film. Its function is as follows. In presence of calcium ions, it binds to surfactant phospholipids and contributes to lower the surface tension at the air-liquid interface in the alveoli of the mammalian lung and is essential for normal respiration. Enhances the expression of MYO18A/SP-R210 on alveolar macrophages. The protein is Pulmonary surfactant-associated protein A (SFTPA1) of Oryctolagus cuniculus (Rabbit).